Consider the following 328-residue polypeptide: Ribosomal protein L11 methyltransferase (328 aa).

4 residues coordinate S-adenosyl-L-methionine: Thr153, Gly174, Asp196, and Asn263.

Belongs to the methyltransferase superfamily. PrmA family.

The protein resides in the cytoplasm. It carries out the reaction L-lysyl-[protein] + 3 S-adenosyl-L-methionine = N(6),N(6),N(6)-trimethyl-L-lysyl-[protein] + 3 S-adenosyl-L-homocysteine + 3 H(+). Functionally, methylates ribosomal protein L11. This chain is Ribosomal protein L11 methyltransferase, found in Chloroflexus aurantiacus (strain ATCC 29366 / DSM 635 / J-10-fl).